A 268-amino-acid chain; its full sequence is 5'-nucleotidase SurE (268 aa).

D24, D25, S55, and N111 together coordinate a divalent metal cation.

This sequence belongs to the SurE nucleotidase family. The cofactor is a divalent metal cation.

The protein resides in the cytoplasm. It catalyses the reaction a ribonucleoside 5'-phosphate + H2O = a ribonucleoside + phosphate. In terms of biological role, nucleotidase that shows phosphatase activity on nucleoside 5'-monophosphates. The sequence is that of 5'-nucleotidase SurE from Deinococcus radiodurans (strain ATCC 13939 / DSM 20539 / JCM 16871 / CCUG 27074 / LMG 4051 / NBRC 15346 / NCIMB 9279 / VKM B-1422 / R1).